Consider the following 291-residue polypeptide: Putative heme-binding peroxidase (291 aa).

Residue histidine 61 is the Proton acceptor of the active site. Heme b is bound at residue histidine 185. Residue tryptophan 201 is the Tryptophan radical intermediate of the active site.

This sequence belongs to the peroxidase family. Cytochrome c peroxidase subfamily. The cofactor is heme b.

In terms of biological role, destroys radicals which are normally produced within the cells and which are toxic to biological systems. This Candida albicans (strain SC5314 / ATCC MYA-2876) (Yeast) protein is Putative heme-binding peroxidase (CCP2).